The chain runs to 280 residues: F-box/SPRY domain-containing protein 1 (280 aa).

The disordered stretch occupies residues 1-28 (MAAAINAAVPSPPVAPSAPPPPPPPLGQ). Positions 10–26 (PSPPVAPSAPPPPPPPL) are enriched in pro residues. The F-box domain maps to 27–76 (GQASDRFPSLVLELVFSYLDLPDLRSCGLVCKRWYRCLHGDKNSDVWRSL). A B30.2/SPRY domain is found at 86–278 (LRTDILCNLR…VTLVYLGKPL (193 aa)).

The protein belongs to the FBXO45/Fsn family. In terms of assembly, probable component of a E3 ubiquitin ligase complex.

Its pathway is protein modification; protein ubiquitination. The polypeptide is F-box/SPRY domain-containing protein 1 (fbxo45) (Xenopus laevis (African clawed frog)).